The chain runs to 235 residues: Type II secretion system protein N (235 aa).

The Cytoplasmic segment spans residues 1-34; sequence MIPRRSSDITIKTRSDVLPFSGASSRWLQRYAPA. The helical; Signal-anchor for type II membrane protein transmembrane segment at 35–55 threads the bilayer; that stretch reads LLAVALIIAMSISLAWQAAGW. Topologically, residues 56–235 are periplasmic; that stretch reads LRLQRSPVAV…EPTTTPTESD (180 aa). Positions 205–235 are disordered; it reads DALRQQMEATPIAEPAEEDSSEPTTTPTESD. Over residues 226–235 the composition is skewed to low complexity; the sequence is EPTTTPTESD.

The protein resides in the cell inner membrane. In terms of biological role, involved in a type II secretion system (T2SS, formerly general secretion pathway, GSP) for the export of proteins. Required for the translocation of a variety of enzymes across the outer membrane. The sequence is that of Type II secretion system protein N (xcpP) from Pseudomonas aeruginosa (strain ATCC 15692 / DSM 22644 / CIP 104116 / JCM 14847 / LMG 12228 / 1C / PRS 101 / PAO1).